Here is a 281-residue protein sequence, read N- to C-terminus: Nucleotide-binding protein DNO_0399 (281 aa).

6-13 lines the ATP pocket; sequence GMSGAGKS. Residue 55 to 58 participates in GTP binding; the sequence is DARN.

It belongs to the RapZ-like family.

Its function is as follows. Displays ATPase and GTPase activities. This chain is Nucleotide-binding protein DNO_0399, found in Dichelobacter nodosus (strain VCS1703A).